A 387-amino-acid chain; its full sequence is MSVIKMTDLELAGKRVFIRADLNVPVKDGKVTSDARILASLPTIKLCLEAGAKVMVTSHLGRPTEGEYNEEFSLAPVVNYLNDALDCDVKLAKDYLDGLELNAGELVVLENVRFNKGEKKNEEELSKKYAALCDIFVMDAFGTAHRAQASTHGVGMNAPVACAGPLLAAELEALGKAMSNPERPLVAIVGGSKVSTKLTVLESLSKIADQLVVGGGIANTFIAAEGHNVGKSLYEADLVETAQKLMKECAIPVATDVACAKAFDENAEAEIKHVSEVQDDDMIFDLGPDSTAALAEIIGNAKTILWNGPVGVFEFKNFEAGTAGISKAIAESAGFSVAGGGDTLAAIDKFGIKADVSYISTGGGAFLEFVEGKVLPAVAMLEERAKA.

Substrate contacts are provided by residues 21–23 (DLN), R36, 59–62 (HLGR), R113, and R146. Residues K197, E314, and 340-343 (GGDT) each bind ATP.

It belongs to the phosphoglycerate kinase family. Monomer.

The protein localises to the cytoplasm. It carries out the reaction (2R)-3-phosphoglycerate + ATP = (2R)-3-phospho-glyceroyl phosphate + ADP. The protein operates within carbohydrate degradation; glycolysis; pyruvate from D-glyceraldehyde 3-phosphate: step 2/5. The sequence is that of Phosphoglycerate kinase from Aliivibrio fischeri (strain ATCC 700601 / ES114) (Vibrio fischeri).